Reading from the N-terminus, the 208-residue chain is MRDPVDYFHNSLVPMVVEQSSRGERAFDIYSRLLRERIIFLTGPVEDQGASLIVAQLLFLEAENPKKEISFYINSPGGVVTSGLSIYDTMQFIRCPVTTLCVGQAASMGSLLLAAGEAGHRFALPNARIMVHQPSGGFQGQATDILIHAREIEALKKRLNEIYVKHTGRDYETIHQALERDNFMTADAAKEFGLIDDILHKRPEPAAA.

Serine 107 serves as the catalytic Nucleophile. Residue histidine 132 is part of the active site.

Belongs to the peptidase S14 family. Fourteen ClpP subunits assemble into 2 heptameric rings which stack back to back to give a disk-like structure with a central cavity, resembling the structure of eukaryotic proteasomes.

It localises to the cytoplasm. It catalyses the reaction Hydrolysis of proteins to small peptides in the presence of ATP and magnesium. alpha-casein is the usual test substrate. In the absence of ATP, only oligopeptides shorter than five residues are hydrolyzed (such as succinyl-Leu-Tyr-|-NHMec, and Leu-Tyr-Leu-|-Tyr-Trp, in which cleavage of the -Tyr-|-Leu- and -Tyr-|-Trp bonds also occurs).. In terms of biological role, cleaves peptides in various proteins in a process that requires ATP hydrolysis. Has a chymotrypsin-like activity. Plays a major role in the degradation of misfolded proteins. This chain is ATP-dependent Clp protease proteolytic subunit, found in Methylorubrum populi (strain ATCC BAA-705 / NCIMB 13946 / BJ001) (Methylobacterium populi).